Here is an 816-residue protein sequence, read N- to C-terminus: MGEGAGDRVLSRLHSVRERIGDSLSAHPNELVAVFTRLKNLGKGMLQPHQIIAEYNNAIPEAEREKLKDGAFEDVLRAAQEAIVIPPWVALAIRPRPGVWEYVRVNVSELAVEELRVPEYLQFKEQLVEEGPNNNFVLELDFEPFNASFPRPSLSKSIGNGVQFLNRHLSSKLFHDKESMYPLLNFLRAHNYKGMTMMLNDRIRSLSALQGALRKAEEHLSTLQADTPYSEFHHRFQELGLEKGWGDCAKRAQETIHLLLDLLEAPDPSTLEKFLGTIPMVFNVVILSPHGYFAQANVLGYPDTGGQVVYILDQVRAMENEMLLRIKQCGLDITPKILIVTRLLPDATGTTCGQRLEKVLGTEHCHILRVPFRTENGIVRKWISRFEVWPYLETYTDDVAHEIAGELQANPDLIIGNYSDGNLVACLLAHKMGVTHCTIAHALEKTKYPNSDLYWKKFEDHYHFSCQFTTDLIAMNHADFIITSTFQEIAGNKDTVGQYESHMAFTMPGLYRVVHGIDVFDPKFNIVSPGADLSIYFPYTESHKRLTSLHPEIEELLYSQTENTEHKFVLNDRNKPIIFSMARLDRVKNLTGLVELYGRNKRLQELVNLVVVCGDHGNPSKDKEEQAEFKKMFDLIEQYNLNGHIRWISAQMNRVRNGELYRYICDTKGAFVQPAFYEAFGLTVVEAMTCGLPTFATAYGGPAEIIVHGVSGYHIDPYQGDKASALLVDFFDKCQAEPSHWSKISQGGLQRIEEKYTWKLYSERLMTLTGVYGFWKYVSNLERRETRRYLEMLYALKYRTMASTVPLAVEGEPSSK.

Residue S15 is modified to Phosphoserine. The interval 280-757 (MVFNVVILSP…GLQRIEEKYT (478 aa)) is GT-B glycosyltransferase.

It belongs to the glycosyltransferase 1 family. Plant sucrose synthase subfamily.

It carries out the reaction an NDP-alpha-D-glucose + D-fructose = a ribonucleoside 5'-diphosphate + sucrose + H(+). Its function is as follows. Sucrose-cleaving enzyme that provides UDP-glucose and fructose for various metabolic pathways. This chain is Sucrose synthase 2 (SUS1), found in Zea mays (Maize).